The chain runs to 120 residues: Anti-adapter protein IraM (120 aa).

It belongs to the IraM/RssC family.

Its subcellular location is the cytoplasm. Functionally, involved in the stabilization of the sigma stress factor RpoS. The protein is Anti-adapter protein IraM of Salmonella typhimurium (strain LT2 / SGSC1412 / ATCC 700720).